The primary structure comprises 441 residues: Gamma-glutamyl phosphate reductase (441 aa).

It belongs to the gamma-glutamyl phosphate reductase family.

The protein localises to the cytoplasm. The enzyme catalyses L-glutamate 5-semialdehyde + phosphate + NADP(+) = L-glutamyl 5-phosphate + NADPH + H(+). It participates in amino-acid biosynthesis; L-proline biosynthesis; L-glutamate 5-semialdehyde from L-glutamate: step 2/2. Functionally, catalyzes the NADPH-dependent reduction of L-glutamate 5-phosphate into L-glutamate 5-semialdehyde and phosphate. The product spontaneously undergoes cyclization to form 1-pyrroline-5-carboxylate. In Hydrogenobaculum sp. (strain Y04AAS1), this protein is Gamma-glutamyl phosphate reductase.